A 268-amino-acid polypeptide reads, in one-letter code: Indole-3-glycerol phosphate synthase 2 (268 aa).

The protein belongs to the TrpC family.

It catalyses the reaction 1-(2-carboxyphenylamino)-1-deoxy-D-ribulose 5-phosphate + H(+) = (1S,2R)-1-C-(indol-3-yl)glycerol 3-phosphate + CO2 + H2O. Its pathway is amino-acid biosynthesis; L-tryptophan biosynthesis; L-tryptophan from chorismate: step 4/5. The chain is Indole-3-glycerol phosphate synthase 2 (trpC2) from Ralstonia nicotianae (strain ATCC BAA-1114 / GMI1000) (Ralstonia solanacearum).